Reading from the N-terminus, the 99-residue chain is DNA-directed RNA polymerase subunit omega (99 aa).

Belongs to the RNA polymerase subunit omega family. In terms of assembly, the RNAP catalytic core consists of 2 alpha, 1 beta, 1 beta' and 1 omega subunit. When a sigma factor is associated with the core the holoenzyme is formed, which can initiate transcription.

It carries out the reaction RNA(n) + a ribonucleoside 5'-triphosphate = RNA(n+1) + diphosphate. Its function is as follows. Promotes RNA polymerase assembly. Latches the N- and C-terminal regions of the beta' subunit thereby facilitating its interaction with the beta and alpha subunits. This chain is DNA-directed RNA polymerase subunit omega, found in Deinococcus deserti (strain DSM 17065 / CIP 109153 / LMG 22923 / VCD115).